A 304-amino-acid chain; its full sequence is Uricase (304 aa).

Alanine 2 carries the post-translational modification N-acetylalanine. Residues lysine 10 and lysine 23 each carry the N6-acetyllysine; alternate modification. N6-succinyllysine; alternate is present on residues lysine 10 and lysine 23. The active-site Charge relay system is the lysine 23. N6-acetyllysine occurs at positions 27 and 36. A phosphoserine mark is found at serine 39 and serine 63. Residue threonine 68 is the Charge relay system of the active site. Urate contacts are provided by threonine 68 and aspartate 69. Residues lysine 118, lysine 122, and lysine 164 each carry the N6-acetyllysine modification. Phenylalanine 170 lines the urate pocket. Residues lysine 175 and lysine 185 each carry the N6-acetyllysine modification. Arginine 187 contacts urate. Residues lysine 221 and lysine 228 each carry the N6-acetyllysine; alternate modification. Residues lysine 221 and lysine 228 each carry the N6-succinyllysine; alternate modification. Phosphoserine is present on serine 232. 3 residues coordinate urate: valine 235, glutamine 236, and asparagine 262. Residue histidine 264 is the Charge relay system of the active site. Position 278 is an N6-acetyllysine (lysine 278). Tyrosine 289 carries the phosphotyrosine modification. The Microbody targeting signal motif lies at 302-304 (SKL).

This sequence belongs to the uricase family.

It localises to the peroxisome. The catalysed reaction is urate + O2 + H2O = 5-hydroxyisourate + H2O2. It participates in purine metabolism; urate degradation; (S)-allantoin from urate: step 1/3. Functionally, catalyzes the oxidation of uric acid to 5-hydroxyisourate, which is further processed to form (S)-allantoin. The polypeptide is Uricase (UOX) (Canis lupus familiaris (Dog)).